The primary structure comprises 324 residues: MSVTTATSGALIFSGASLLVSLFAAASIYSQVSSIWTELDNEIDSFKLLTNDIWGDMINLGAGSASNRIRRQAYGGYGATGTNAPEPQFPQGDKGPLPVPGLPFGPNVSGGSDRCQCTVENTCPTGPDGEEGEQGPDGQDGVDGVPGFDGQDCPDVEQQPSQGCFTCPQGLPGPQGSQGAPGIRGMRGARGQPGYPGRDGQPGMPGEMGPTGAPGDDGAPGASGMKGDDAEKPVGRQGQRGQPGEQGPDGEEGPAGKDAFEGPPGVEGEVGVPGYQGSAGPDGEEGPRGPSGLPGKDAEYCKCPTRDDGGNSHRAWRRKHKRVY.

The N-terminal stretch at 1 to 30 (MSVTTATSGALIFSGASLLVSLFAAASIYS) is a signal peptide. The tract at residues 119–324 (VENTCPTGPD…AWRRKHKRVY (206 aa)) is disordered. 3 triple-helical region regions span residues 129-152 (GEEGEQGPDGQDGVDGVPGFDGQD), 170-229 (GLPG…KGDD), and 235-294 (GRQG…SGLP). Composition is skewed to low complexity over residues 136-151 (PDGQDGVDGVPGFDGQ), 168-181 (PQGLPGPQGSQGAP), 210-223 (PTGAPGDDGAPGAS), 235-246 (GRQGQRGQPGEQ), and 261-273 (EGPPGVEGEVGVP). The segment covering 296–311 (KDAEYCKCPTRDDGGN) has biased composition (basic and acidic residues). Basic residues predominate over residues 314–324 (RAWRRKHKRVY).

This sequence belongs to the cuticular collagen family. In terms of assembly, collagen polypeptide chains are complexed within the cuticle by disulfide bonds and other types of covalent cross-links.

In terms of biological role, nematode cuticles are composed largely of collagen-like proteins. The cuticle functions both as an exoskeleton and as a barrier to protect the worm from its environment. Dose-dependent regulator of body length and shape. The polypeptide is Cuticle collagen lon-3 (lon-3) (Caenorhabditis elegans).